The primary structure comprises 236 residues: Dual specificity protein phosphatase 15 (236 aa).

A lipid anchor (N-myristoyl glycine) is attached at G2. The Tyrosine-protein phosphatase domain maps to 4 to 144 (GMTKVLPGLY…LEEFGWANSQ (141 aa)). Catalysis depends on C88, which acts as the Phosphocysteine intermediate. Positions 178–213 (GPGTSAPSATTASSAASEGTLQRLVPRSPRESHRPL) are disordered. Residues 181–194 (TSAPSATTASSAAS) are compositionally biased toward low complexity.

It belongs to the protein-tyrosine phosphatase family. Non-receptor class dual specificity subfamily.

It is found in the cell membrane. The enzyme catalyses O-phospho-L-tyrosyl-[protein] + H2O = L-tyrosyl-[protein] + phosphate. The catalysed reaction is O-phospho-L-seryl-[protein] + H2O = L-seryl-[protein] + phosphate. It carries out the reaction O-phospho-L-threonyl-[protein] + H2O = L-threonyl-[protein] + phosphate. May play a role in the regulation of oligodendrocyte differentiation. May play a role in the regulation of myelin formation. Involved in the regulation of Erk1/2 phosphorylation in Schwann cells; the signaling may be linked to the regulation of myelination. May dephosphorylate MAPK13, ATF2, ERBB3, PDGFRB and SNX6. This chain is Dual specificity protein phosphatase 15 (Dusp15), found in Rattus norvegicus (Rat).